Reading from the N-terminus, the 235-residue chain is uncharacterized protein (235 aa).

To E.coli YbeU.

This is an uncharacterized protein from Escherichia coli (strain K12).